We begin with the raw amino-acid sequence, 146 residues long: MISVIISGHGDFPIALKESSGMIFGEENNLIAVPFFKGEGIQTLQEKYHQALKDIPEEHEVLFLVDIFGGTPYNAAASFIAEDQRMDMAAGVNLPILLEVLSLREHLALKDLLNNLKAMSQQSFQVCSEHLEKVKTANQDTREDEL.

Positions 1–124 (MISVIISGHG…NLKAMSQQSF (124 aa)) constitute a PTS EIIA type-4 domain. Residue H9 is the Tele-phosphohistidine intermediate of the active site. At H9 the chain carries Phosphohistidine; by HPr.

It localises to the cytoplasm. Functionally, the phosphoenolpyruvate-dependent sugar phosphotransferase system (sugar PTS), a major carbohydrate active transport system, catalyzes the phosphorylation of incoming sugar substrates concomitantly with their translocation across the cell membrane. The enzyme II LevDE PTS system is involved in fructose transport. LevD and LevE act as negative regulators of the levanase operon. They may be involved in a PTS-mediated phosphorylation of a regulator. In Bacillus subtilis (strain 168), this protein is PTS system fructose-specific EIIA component.